The primary structure comprises 390 residues: MKFVDEASILVVAGDGGNGCVSFRREKYIPKGGPDGGDGGDGGDVWMEADENLNTLIDYRFEKSFRAERGQNGASRDCTGKRGKDVTIKVPVGTRVIDQGTGETMGDMTKHGQRLLVAKGGWHGLGNTRFKSSVNRTPRQKTNGTPGDKRELLLELMLLADVGMLGMPNAGKSTFIRAVSAAKPKVADYPFTTLVPSLGVVRMDNEKSFVVADIPGLIEGAAEGAGLGIRFLKHLERCRVLLHLIDIDPIDGTDPVENARIIISELEKYSQDLAAKPRWLVFNKIDLLDKAEAEEKAKAIAEALGWEDKYYLISAASGLGVKDLCWDVMTFIIENPVVQAEEAKQPEKVEFMWDDYHRQQLEEIAEEDDEDWDDDWDEDDEEGVEFIYKR.

An Obg domain is found at methionine 1–leucine 159. A disordered region spans residues asparagine 127–glycine 147. Polar residues predominate over residues arginine 129 to threonine 145. The 174-residue stretch at alanine 160–isoleucine 333 folds into the OBG-type G domain. Residues glycine 166–serine 173, phenylalanine 191–valine 195, aspartate 213–glycine 216, asparagine 283–aspartate 286, and serine 314–alanine 316 each bind GTP. Serine 173 and threonine 193 together coordinate Mg(2+).

It belongs to the TRAFAC class OBG-HflX-like GTPase superfamily. OBG GTPase family. In terms of assembly, monomer. Mg(2+) serves as cofactor.

Its subcellular location is the cytoplasm. An essential GTPase which binds GTP, GDP and possibly (p)ppGpp with moderate affinity, with high nucleotide exchange rates and a fairly low GTP hydrolysis rate. Plays a role in control of the cell cycle, stress response, ribosome biogenesis and in those bacteria that undergo differentiation, in morphogenesis control. This chain is GTPase Obg, found in Escherichia fergusonii (strain ATCC 35469 / DSM 13698 / CCUG 18766 / IAM 14443 / JCM 21226 / LMG 7866 / NBRC 102419 / NCTC 12128 / CDC 0568-73).